The following is a 183-amino-acid chain: uncharacterized protein (183 aa).

The helical transmembrane segment at 153 to 175 threads the bilayer; it reads LLYVFIRLFAGCLKVFRLCILWL.

The protein localises to the membrane. This is an uncharacterized protein from Saccharomyces cerevisiae (strain ATCC 204508 / S288c) (Baker's yeast).